Consider the following 63-residue polypeptide: Small ribosomal subunit protein eS31 (63 aa).

Residues cysteine 34, cysteine 37, cysteine 53, and cysteine 56 each contribute to the Zn(2+) site. The segment at 34 to 56 (CPKCGSVMAFHREPVPRWHCGKC) adopts a C4-type zinc-finger fold.

It belongs to the eukaryotic ribosomal protein eS31 family. As to quaternary structure, part of the 30S ribosomal subunit. The cofactor is Zn(2+).

The chain is Small ribosomal subunit protein eS31 from Pyrobaculum neutrophilum (strain DSM 2338 / JCM 9278 / NBRC 100436 / V24Sta) (Thermoproteus neutrophilus).